A 251-amino-acid chain; its full sequence is Chloride intracellular channel protein 5 (251 aa).

The segment at 1–98 (MTDSATANGD…EEFLEETLTP (98 aa)) is required for insertion into the membrane. The G-site motif lies at 32-35 (CPFS). A helical transmembrane segment spans residues 34 to 54 (FSQRLFMILWLKGVVFNVTTV). The GST C-terminal domain occupies 101 to 241 (YPKLAARHRE…AADSEIELAY (141 aa)).

This sequence belongs to the chloride channel CLIC family. As to quaternary structure, component of a multimeric complex consisting of several cytoskeletal proteins, including actin, ezrin, alpha-actinin, gelsolin, and IQGAP1. Interacts with AKAP9. Interacts with TPRN. TPRN, CLIC5 and PTPQR form concentric rings at the base of stereocilia and may form a complex. Interacts with EZR, MYO6 and RDX; the proteins may work together as a complex to stabilize linkages between the plasma membrane and subjacent actin cytoskeleton at the stereocilium base. In terms of tissue distribution, detected in cochlea, in cochlear and vestibular hair cell bundles in the organ of Corti (at protein level). Expressed neonatal and adult cardiomyocytes (at protein level).

The protein resides in the golgi apparatus. Its subcellular location is the cytoplasm. It localises to the cytoskeleton. The protein localises to the microtubule organizing center. It is found in the centrosome. The protein resides in the cell cortex. Its subcellular location is the membrane. It localises to the apical cell membrane. The protein localises to the mitochondrion. It is found in the cell projection. The protein resides in the stereocilium. It carries out the reaction Na(+)(in) = Na(+)(out). The enzyme catalyses K(+)(in) = K(+)(out). It catalyses the reaction chloride(in) = chloride(out). Its activity is regulated as follows. Inhibited by F-actin. In terms of biological role, in the soluble state, catalyzes glutaredoxin-like thiol disulfide exchange reactions with reduced glutathione as electron donor. Can insert into membranes and form non-selective ion channels almost equally permeable to Na(+), K(+) and Cl(-). Required for normal hearing. It is necessary for the formation of stereocilia in the inner ear and normal development of the organ of Corti. May play a role in the regulation of transepithelial ion absorption and secretion. Is required for the development and/or maintenance of the proper glomerular endothelial cell and podocyte architecture. Plays a role in formation of the lens suture in the eye, which is important for normal optical properties of the lens. The polypeptide is Chloride intracellular channel protein 5 (Clic5) (Rattus norvegicus (Rat)).